The chain runs to 55 residues: Large ribosomal subunit protein bL33 (55 aa).

It belongs to the bacterial ribosomal protein bL33 family.

This chain is Large ribosomal subunit protein bL33, found in Allorhizobium ampelinum (strain ATCC BAA-846 / DSM 112012 / S4) (Agrobacterium vitis (strain S4)).